The following is a 369-amino-acid chain: H-2 class I histocompatibility antigen, K-K alpha chain (369 aa).

Residues 1 to 21 (MAPCMLLLLLAAALAPTQTRA) form the signal peptide. The alpha-1 stretch occupies residues 22-111 (GPHSLRYFHT…ALRYYNQSAG (90 aa)). Residues 22-305 (GPHSLRYFHT…EPPPSTVSNT (284 aa)) lie on the Extracellular side of the membrane. Residue N107 is glycosylated (N-linked (GlcNAc...) asparagine). The segment at 112 to 203 (GSHTFQRMYG…QLGNATLPRT (92 aa)) is alpha-2. C122 and C185 are oxidised to a cystine. Residue N197 is glycosylated (N-linked (GlcNAc...) asparagine). The alpha-3 stretch occupies residues 204–295 (DSPKAHVTRH…GLPEPLTLRW (92 aa)). The 89-residue stretch at 206-294 (PKAHVTRHSR…QGLPEPLTLR (89 aa)) folds into the Ig-like C1-type domain. A disulfide bridge connects residues C224 and C280. A connecting peptide region spans residues 296–305 (EPPPSTVSNT). Residues 306 to 328 (VIIAVLVVLGAAIVTGAVVAFVM) traverse the membrane as a helical segment. The Cytoplasmic segment spans residues 329–369 (KMRRRNTGGKGGDYALAPGSQTSDLSLPDCKVMVHDPHSLA). 2 positions are modified to phosphoserine: S351 and S354.

This sequence belongs to the MHC class I family. As to quaternary structure, heterodimer of an alpha chain and a beta chain (beta-2-microglobulin).

It localises to the membrane. Involved in the presentation of foreign antigens to the immune system. The chain is H-2 class I histocompatibility antigen, K-K alpha chain (H2-K1) from Mus musculus (Mouse).